Here is a 423-residue protein sequence, read N- to C-terminus: Carboxypeptidase S1 (423 aa).

4 disulfides stabilise this stretch: cysteine 8–cysteine 68, cysteine 55–cysteine 300, cysteine 223–cysteine 246, and cysteine 230–cysteine 239. Serine 143 is a catalytic residue. N-linked (GlcNAc...) asparagine glycosylation is present at asparagine 200. Aspartate 340 is an active-site residue. Substrate is bound at residue cysteine 343. The active site involves histidine 397. Substrate is bound at residue glutamate 398.

Belongs to the peptidase S10 family.

It carries out the reaction Preferential release of a C-terminal arginine or lysine residue.. The polypeptide is Carboxypeptidase S1 (Penicillium janthinellum (Penicillium vitale)).